Consider the following 600-residue polypeptide: Elongation factor 4 (600 aa).

Positions 4 to 186 (SKIRNFSIIA…AIVNKIPAPY (183 aa)) constitute a tr-type G domain. Residues 16–21 (DHGKST) and 133–136 (NKVD) each bind GTP.

Belongs to the TRAFAC class translation factor GTPase superfamily. Classic translation factor GTPase family. LepA subfamily.

It localises to the cell membrane. It catalyses the reaction GTP + H2O = GDP + phosphate + H(+). In terms of biological role, required for accurate and efficient protein synthesis under certain stress conditions. May act as a fidelity factor of the translation reaction, by catalyzing a one-codon backward translocation of tRNAs on improperly translocated ribosomes. Back-translocation proceeds from a post-translocation (POST) complex to a pre-translocation (PRE) complex, thus giving elongation factor G a second chance to translocate the tRNAs correctly. Binds to ribosomes in a GTP-dependent manner. The polypeptide is Elongation factor 4 (Mesoplasma florum (strain ATCC 33453 / NBRC 100688 / NCTC 11704 / L1) (Acholeplasma florum)).